The following is a 582-amino-acid chain: Pescadillo homolog (582 aa).

The stretch at 277-329 (LSALSASLARVVATVEEEENQLDNFPTEEEDQENMQAREKEQKEQEAQKRLFE) forms a coiled coil. Residues 294 to 309 (EENQLDNFPTEEEDQE) are compositionally biased toward acidic residues. Positions 294–317 (EENQLDNFPTEEEDQENMQAREKE) are disordered. Residues 323–416 (AQKRLFEGLK…MRLPVEDYFL (94 aa)) form the BRCT domain. The segment covering 445-454 (ALQRGEKPVQ) has biased composition (basic and acidic residues). 2 disordered regions span residues 445–511 (ALQR…ETGS) and 554–582 (REVN…AKKQ). A compositionally biased stretch (acidic residues) spans 455-477 (EEDEEEEDEDEEEDDDVDDEEFT). The segment covering 478 to 490 (EEKNLKKMEDTRA) has biased composition (basic and acidic residues). A coiled-coil region spans residues 517 to 582 (RLEQEEKAEE…QKKQKKAKKQ (66 aa)). Residues 572–582 (AQKKQKKAKKQ) show a composition bias toward basic residues.

It belongs to the pescadillo family. In terms of assembly, component of the PeBoW complex, composed of bop1, pes1 and wdr12. The complex is held together by bop1, which interacts with pes1 via its N-terminal domain and with wdr12 via a high-affinity interaction between the seven-bladed beta-propeller domains of the 2 proteins. The PeBoW complex associates with the 66S pre-ribosome.

It localises to the nucleus. Its subcellular location is the nucleolus. The protein resides in the nucleoplasm. Functionally, component of the PeBoW complex, which is required for maturation of 28S and 5.8S ribosomal RNAs and formation of the 60S ribosome. The protein is Pescadillo homolog (pes1) of Salmo salar (Atlantic salmon).